The chain runs to 123 residues: Methanesulfonate monooxygenase ferredoxin subunit (123 aa).

The region spanning 4–99 is the Rieske domain; it reads TYLCDAADVA…LKEEDGKLLA (96 aa). [2Fe-2S] cluster contacts are provided by Cys-43, His-45, Cys-63, and His-66.

It belongs to the bacterial ring-hydroxylating dioxygenase ferredoxin component family. In terms of assembly, the MSA monooxygenase system consists of 4 proteins: the 2 subunits of the hydroxylase component (MsmA and MsmB), a ferredoxin (MsmC) and a ferredoxin reductase (MsmD). The ferredoxin component is dimeric. [2Fe-2S] cluster serves as cofactor.

The protein resides in the cytoplasm. The catalysed reaction is methanesulfonate + NADH + O2 = sulfite + formaldehyde + NAD(+) + H2O. With respect to regulation, MSAMO is inhibited by metal chelators (such as bathophenanthroline, bathocuprione, neocuprione, alpha-alpha-dipyridil and sodium EDTA) and by sodium azide, sodium arsenate and potassium cyanide. Its function is as follows. Methanesulfonate monooxygenase (MSAMO) mediates the primary degradation of methanesulfonic acid (MSA) to produce formaldehyd and inorganic sulfite by initial hydroxylation of the carbon atom prior to spontaneous cleavage of the unstable hydroxymethanesulfonic acid. MSAMO has a restricted substrate range that includes only the short-chain aliphatic sulfonates (methane- to butanesulfonate) and excludes all larger molecules, such as arylsulfonates and aromatic sulfonates. All MSAMO components are required for enzyme activity. The protein is Methanesulfonate monooxygenase ferredoxin subunit of Methylosulfonomonas methylovora.